The sequence spans 500 residues: Probable E3 ubiquitin-protein ligase ARI16 (500 aa).

The tract at residues 74–288 (NSNSSSADRE…QGNWNCSPVA (215 aa)) is TRIAD supradomain. The RING-type 1 zinc finger occupies 78-130 (SSADRETGDGDYLVSTPFCSHKFSTTCWSEYLSDALKKNKEQRGLISCLSQDC). Zn(2+) contacts are provided by C96, H98, C125, C130, C169, C174, C194, C196, C201, C204, H209, C214, C241, C244, C261, C263, C268, C271, H278, and C284. The IBR-type zinc finger occupies 148 to 214 (EMYENYILES…GLESHRPVSC (67 aa)). An RING-type 2; atypical zinc finger spans residues 241–271 (CPKCKIPVQQNGDPNYRLINCICSNNFCWIC). A RanBP2-type zinc finger spans residues 453–483 (EPGSRWFCDRCTFENSWVDKQCKMCFFPLDY).

Belongs to the RBR family. Ariadne subfamily. Zn(2+) serves as cofactor. As to expression, preferentially expressed in green siliques.

The enzyme catalyses [E2 ubiquitin-conjugating enzyme]-S-ubiquitinyl-L-cysteine + [acceptor protein]-L-lysine = [E2 ubiquitin-conjugating enzyme]-L-cysteine + [acceptor protein]-N(6)-ubiquitinyl-L-lysine.. It participates in protein modification; protein ubiquitination. Functionally, might act as an E3 ubiquitin-protein ligase, or as part of E3 complex, which accepts ubiquitin from specific E2 ubiquitin-conjugating enzymes and then transfers it to substrates. The polypeptide is Probable E3 ubiquitin-protein ligase ARI16 (ARI16) (Arabidopsis thaliana (Mouse-ear cress)).